The chain runs to 133 residues: Probable non-specific lipid-transfer protein 2 (133 aa).

The first 31 residues, 1-31, serve as a signal peptide directing secretion; the sequence is MRTVSMAALVVIAAALAWTSSAEPAPAPAPG. 4 disulfides stabilise this stretch: Cys-35/Cys-83, Cys-45/Cys-60, Cys-61/Cys-106, and Cys-81/Cys-121.

The protein belongs to the plant LTP family.

Functionally, plant non-specific lipid-transfer proteins transfer phospholipids as well as galactolipids across membranes. May play a role in wax or cutin deposition in the cell walls of expanding epidermal cells and certain secretory tissues. This chain is Probable non-specific lipid-transfer protein 2, found in Parietaria judaica (Pellitory-of-the-wall).